Reading from the N-terminus, the 938-residue chain is Phosphoenolpyruvate carboxylase (938 aa).

Residues H151 and K591 contribute to the active site.

It belongs to the PEPCase type 1 family. Mg(2+) serves as cofactor.

The catalysed reaction is oxaloacetate + phosphate = phosphoenolpyruvate + hydrogencarbonate. Its function is as follows. Forms oxaloacetate, a four-carbon dicarboxylic acid source for the tricarboxylic acid cycle. The sequence is that of Phosphoenolpyruvate carboxylase from Roseiflexus castenholzii (strain DSM 13941 / HLO8).